Here is a 425-residue protein sequence, read N- to C-terminus: Probable aminotransferase tcpI (425 aa).

Lysine 256 is modified (N6-(pyridoxal phosphate)lysine).

This sequence belongs to the class-I pyridoxal-phosphate-dependent aminotransferase family. The cofactor is pyridoxal 5'-phosphate.

Its pathway is secondary metabolite biosynthesis. Its function is as follows. Probable aminotransferase; part of the gene cluster that mediates the biosynthesis of an unusual class of epipolythiodioxopiperazines (ETPs) lacking the reactive thiol group important for toxicity. Firstly, L-tyrosine is prenylated by tcpD, before undergoing condensation with L-glycine in a reaction catalyzed by the NRPS tcpP leading to the diketopiperazine (DKP) backbone. Afterwards the alpha-carbon of tyrosine is oxidized by the cytochrome P450 tcpC to form a hydroxyl group. However, in contrast other ETP biosynthesis pathways studied so far, tcpC is not able to bishydroxylate the DKP at both alpha-carbon positions, but hydroxylates the alpha-carbon of the tyrosine part and the nitrogen of the glycine part. The next steps involve an alpha,beta-elimination reaction catalyzed by tcpI, a methylation by the methyltransferase tcpN the action of the four enzyme cascade tcpG/K/J/I. Due to a dysfunctional cytochrome P450 monooxygenase tcpC, the pathway leads to the biosynthesis of probable non-toxic metabolites lacking the reactive thiol group. This is Probable aminotransferase tcpI from Claviceps purpurea (strain 20.1) (Ergot fungus).